Reading from the N-terminus, the 262-residue chain is MQVDLLSSAQSAHALHLFHQHSPLVHCMTNDVVQTFTANTLLALGASPAMVIETEEASHFAAIASALLINVGTLTQPRAQAMSAAVEQATRSQTPWTLDPVAVGALDYRRRFCVELLSHKPTAIRGNASEIMALAGVANGGRGVDTTDAAANAIPAAQTLARETGAIVVVTGEVDYVTDGRRTVGIHGGDPLMTKVVGTGCALSAVVAACCALPGDTLENIASACHWMKQAGERAVARSEGPGSFVPHFLDALWQLTQEVQA.

Position 50 (Met-50) interacts with substrate. Positions 125 and 171 each coordinate ATP. Gly-198 is a binding site for substrate.

Belongs to the Thz kinase family. Requires Mg(2+) as cofactor.

The catalysed reaction is 5-(2-hydroxyethyl)-4-methylthiazole + ATP = 4-methyl-5-(2-phosphooxyethyl)-thiazole + ADP + H(+). Its pathway is cofactor biosynthesis; thiamine diphosphate biosynthesis; 4-methyl-5-(2-phosphoethyl)-thiazole from 5-(2-hydroxyethyl)-4-methylthiazole: step 1/1. Catalyzes the phosphorylation of the hydroxyl group of 4-methyl-5-beta-hydroxyethylthiazole (THZ). The protein is Hydroxyethylthiazole kinase of Escherichia coli O6:K15:H31 (strain 536 / UPEC).